We begin with the raw amino-acid sequence, 4576 residues long: Mucin-2 (4576 aa).

A signal peptide spans 1 to 20 (MGLPLARLVAACLVLALAKG). The residue at position 21 (serine 21) is a Phosphoserine. One can recognise a VWFD 1 domain in the interval 32–205 (HVCSTWGDFH…KINKPEVQCE (174 aa)). Disulfide bonds link cysteine 34-cysteine 166, cysteine 56-cysteine 204, cysteine 64-cysteine 163, cysteine 216-cysteine 253, cysteine 223-cysteine 248, cysteine 235-cysteine 273, cysteine 255-cysteine 261, cysteine 263-cysteine 289, cysteine 293-cysteine 327, cysteine 306-cysteine 319, cysteine 310-cysteine 349, cysteine 329-cysteine 343, cysteine 351-cysteine 373, cysteine 368-cysteine 385, cysteine 371-cysteine 380, cysteine 389-cysteine 526, cysteine 411-cysteine 561, cysteine 433-cysteine 441, cysteine 572-cysteine 617, cysteine 586-cysteine 612, cysteine 599-cysteine 637, cysteine 619-cysteine 625, cysteine 627-cysteine 652, cysteine 659-cysteine 696, cysteine 672-cysteine 686, cysteine 676-cysteine 716, cysteine 698-cysteine 710, cysteine 718-cysteine 740, and cysteine 738-cysteine 747. Position 46 (aspartate 46) interacts with Ca(2+). Residues methionine 143 and methionine 151 each coordinate Cu(+). Glutamate 153 contacts Cu(2+). A glycan (N-linked (GlcNAc...) asparagine) is linked at asparagine 160. Ca(2+)-binding residues include aspartate 168, asparagine 170, and glutamate 177. Residue histidine 275 coordinates Cu(2+). A TIL domain is found at 293-349 (CPNNMVYLESSSPCVDTCSHLEVSSLCEEHYMDGCFCPEGTVYDDITGSGCIPVSQC). Histidine 322 contacts Cu(2+). Residue methionine 324 coordinates Cu(+). Residues 387-562 (ETCALEGGSH…NTWKAQSSCH (176 aa)) form the VWFD 2 domain. Aspartate 401 contributes to the Ca(2+) binding site. Residue asparagine 421 is glycosylated (N-linked (GlcNAc...) asparagine). Residues asparagine 528, asparagine 530, leucine 532, aspartate 535, and aspartate 536 each coordinate Ca(2+). Residue asparagine 668 is glycosylated (N-linked (GlcNAc...) asparagine). Asparagine 768 is a glycosylation site (N-linked (GlcNAc...) asparagine). 21 disulfides stabilise this stretch: cysteine 782/cysteine 818, cysteine 800/cysteine 812, cysteine 820/cysteine 843, cysteine 837/cysteine 855, cysteine 841/cysteine 850, cysteine 859/cysteine 990, cysteine 881/cysteine 1025, cysteine 890/cysteine 987, cysteine 907/cysteine 914, cysteine 1035/cysteine 1078, cysteine 1049/cysteine 1073, cysteine 1060/cysteine 1100, cysteine 1080/cysteine 1088, cysteine 1090/cysteine 1115, cysteine 1106/cysteine 1135, cysteine 1119/cysteine 1161, cysteine 1143/cysteine 1185, cysteine 1165/cysteine 1179, cysteine 1187/cysteine 1211, cysteine 1206/cysteine 1236, and cysteine 1209/cysteine 1219. N-linked (GlcNAc...) asparagine glycosylation is present at asparagine 838. Residues 857-1026 (STCSIYGSGH…NSWKEASTCP (170 aa)) form the VWFD 3 domain. Aspartate 871 provides a ligand contact to Ca(2+). An N-linked (GlcNAc...) asparagine glycan is attached at asparagine 893. Asparagine 992, aspartate 994, asparagine 999, and aspartate 1000 together coordinate Ca(2+). N-linked (GlcNAc...) asparagine glycans are attached at residues asparagine 1137 and asparagine 1152. Residues asparagine 1213, asparagine 1228, and asparagine 1244 are each glycosylated (N-linked (GlcNAc...) asparagine). O-linked (GalNAc) threonine glycans are attached at residues threonine 1265, threonine 1268, threonine 1269, threonine 1281, and threonine 1292. Residues asparagine 1305, histidine 1308, glycine 1315, aspartate 1316, and glutamate 1318 each contribute to the Ca(2+) site. Asparagine 1352 carries an N-linked (GlcNAc...) asparagine glycan. Positions 1375 and 1376 each coordinate Ca(2+). 5 tandem repeats follow at residues 1395–1415 (SPTT…PTTL), 1416–1427 (PTSSPVTSSATL), 1428–1437 (PTTSSITSTI), 1438–1453 (SPTT…SPTT), and 1454–1460 (SPTTSPT). The tract at residues 1395–2866 (SPTTSTTTLS…PTTSSTFTTP (1472 aa)) is disordered. A 7B repeat occupies 1478–1497 (PSTTSPTTPSTTPSTTSPTT). Residues 1498 to 1510 (PSTTSPTTPTSTS) form an 8A repeat. The 9B repeat unit spans residues 1530–1556 (SPTTSPTTPSTTSPTISTTTSTISPTT). The stretch at 1557-1572 (PSTTSPNTPSTTSSTI) is one 10A repeat. One copy of the 10B repeat lies at 1573-1588 (PSTTSPTTPSTTSPTI). Residues 1589–1607 (STTTSTTSPTTPSTTSPTT) form an 11A repeat. An 11B repeat occupies 1608–1634 (PSTTSPTTPSTTSPTISTTTLTTSPTT). Repeat copies occupy residues 1635 to 1642 (PSTTSPTT) and 1665 to 1681 (ISPT…LSTT). N-linked (GlcNAc...) asparagine glycosylation is found at asparagine 2529 and asparagine 2910. Low complexity-rich tracts occupy residues 2975 to 3623 (PSST…GSTP) and 3631 to 3706 (PGPT…TSPS). The tract at residues 2975 to 3706 (PSSTTTETPT…SSTSPITSPS (732 aa)) is disordered. N-linked (GlcNAc...) asparagine glycosylation is found at asparagine 3734, asparagine 3745, and asparagine 3756. Over residues 3764–3774 (STPTPSTPTPT) the composition is skewed to pro residues. The disordered stretch occupies residues 3764 to 3806 (STPTPSTPTPTPSQTTTPSTTSSKSTPSTPQSTSPKSTLSTPT). The segment covering 3775–3806 (PSQTTTPSTTSSKSTPSTPQSTSPKSTLSTPT) has biased composition (low complexity). 3 N-linked (GlcNAc...) asparagine glycosylation sites follow: asparagine 3823, asparagine 3830, and asparagine 3903. The 184-residue stretch at 3880 to 4063 (CYCTGWGDPH…VNDPSKPHCP (184 aa)) folds into the VWFD 4 domain. 3 cysteine pairs are disulfide-bonded: cysteine 3882–cysteine 4023, cysteine 3904–cysteine 4062, and cysteine 3928–cysteine 3936. N-linked (GlcNAc...) asparagine glycans are attached at residues asparagine 3991, asparagine 4017, asparagine 4028, asparagine 4083, asparagine 4149, asparagine 4183, asparagine 4254, asparagine 4277, asparagine 4351, asparagine 4366, asparagine 4434, asparagine 4465, and asparagine 4488. VWFC domains follow at residues 4213 to 4282 (CVGP…TSCK) and 4320 to 4387 (GVCV…KKCQ). 4 cysteine pairs are disulfide-bonded: cysteine 4471-cysteine 4518, cysteine 4485-cysteine 4532, cysteine 4494-cysteine 4548, and cysteine 4498-cysteine 4550. Residues 4471 to 4556 (CSAVSVMKEI…SCLCQDTVCG (86 aa)) form the CTCK domain.

In terms of assembly, homomultimer; disulfide-linked. The N- and C-terminus mediate their assembly into higher order structures to form filaments. The CTCK domains of two polypeptides associate in the endoplasmic reticulum to generate intermolecularly disulfide-bonded dimers. These dimers progress to the Golgi apparatus, which is a more acidic environment than the endoplasmic reticulum. Under acidic conditions, the N-termini form non-covalent intermolecular interactions that juxtapose assemblies of the third VWD domain (VWD3) from different CTCK-linked dimers. The VWD3 assemblies then become disulfide bonded to one another to produce long, disulfide-linked polymers that remain highly compact until secretion. Interacts with FCGBP. Interacts with AGR2; disulfide-linked. Post-translationally, O-glycosylated. O-glycosylation is required for mucin assembly. Goblet cells synthesize two forms of mucin that differ in branched chain O-glycosylation and the site of production in the colon. May undergo proteolytic cleavage in the outer mucus layer of the colon, contributing to the expanded volume and loose nature of this layer which allows for bacterial colonization in contrast to the inner mucus layer which is dense and devoid of bacteria. In terms of processing, at low pH of 6 and under, undergoes autocatalytic cleavage in vitro in the N-terminal region of the fourth VWD domain. It is likely that this also occurs in vivo and is triggered by the low pH of the late secretory pathway. As to expression, highly expressed in goblet cells of the colon with lower levels in the small intestine and no expression in the stomach (at protein level).

The protein localises to the secreted. In terms of biological role, coats the epithelia of the intestines and other mucus membrane-containing organs to provide a protective, lubricating barrier against particles and infectious agents at mucosal surfaces. Major constituent of the colon mucus, which is mainly formed by large polymeric networks of MUC2 secreted by goblet cells that cover the exposed surfaces of intestine. MUC2 networks form hydrogels that guard the underlying epithelium from pathogens and other hazardous matter entering from the outside world, while permitting nutrient absorption and gas exchange. Acts as a divalent copper chaperone that protects intestinal cells from copper toxicity and facilitates nutritional copper unptake into cells. Binds both Cu(2+) and its reduced form, Cu(1+), at two juxtaposed binding sites: Cu(2+), once reduced to Cu(1+) by vitamin C (ascorbate) or other dietary antioxidants, transits to the other binding site. MUC2-bound Cu(1+) is protected from oxidation in aerobic environments, and can be released for nutritional delivery to cells. Mucin gels store antimicrobial molecules that participate in innate immunity. Mucin glycoproteins also house and feed the microbiome, lubricate tissue surfaces, and may facilitate the removal of contaminants and waste products from the body. Goblet cells synthesize two forms of MUC2 mucin that differ in branched chain O-glycosylation and the site of production in the colon: a (1) 'thick' mucus that wraps the microbiota to form fecal pellets is produced in the proximal, ascending colon. 'Thick' mucus transits along the descending colon and is lubricated by a (2) 'thin' MUC2 mucus produced in the distal colon which adheres to the 'thick' mucus. The chain is Mucin-2 from Mus musculus (Mouse).